The sequence spans 251 residues: ATP synthase delta chain, chloroplastic (251 aa).

Residues 1–64 (MASLQHTTAS…STGGALGARM (64 aa)) constitute a chloroplast transit peptide.

Belongs to the ATPase delta chain family. F-type ATPases have 2 components, CF(1) - the catalytic core - and CF(0) - the membrane proton channel. CF(1) has five subunits: alpha(3), beta(3), gamma(1), delta(1), epsilon(1). CF(0) has three main subunits: a, b and c.

Its subcellular location is the plastid. The protein resides in the chloroplast thylakoid membrane. In terms of biological role, this protein seems to be part of the stalk that links CF(0) to CF(1). It either transmits conformational changes from CF(0) into CF(1) or is implicated in proton conduction. The polypeptide is ATP synthase delta chain, chloroplastic (ATPD) (Pisum sativum (Garden pea)).